Here is a 417-residue protein sequence, read N- to C-terminus: MDKLVIEGGVPLTGTINVSGSKNAALPILMASILAEEPLTYTNVPRLRDIHTTNKLLSILGCPAEFEGDTVSVRPCDLKPEAPYDLVKTMRASVLCLGPLLARLGEARVALPGGCAIGARPVDLHLTALEKMGARFELEEGYIIGRCRKLKGAHIYFDFPTVGGTENLLMAATLAEGETILENAAREPEVVDLARFLIACGAKIEGHGTSVIRIQGVPRLHGCEYAIMPDRIEAGTFLVAAGITGGELLLTGCPWEELDAVIVKLNAMGMHIEKTSEGVLAKRRNGGLRGTDVTTQPFPGFPTDMQAQVMSLMCLAEGTSVVQENIFENRFMHVLELVRMGADIRISGRSAVVRGVKRLTGAPVMASDLRASASLVLAGLAARGTTHVQRIYHLDRGYERIELKLNAVGARIRREAE.

Phosphoenolpyruvate is bound at residue 22-23 (KN). Arg-91 contacts UDP-N-acetyl-alpha-D-glucosamine. The Proton donor role is filled by Cys-115. Cys-115 bears the 2-(S-cysteinyl)pyruvic acid O-phosphothioketal mark. UDP-N-acetyl-alpha-D-glucosamine-binding positions include 120–124 (RPVDL), Asp-304, and Ile-326.

The protein belongs to the EPSP synthase family. MurA subfamily.

Its subcellular location is the cytoplasm. The enzyme catalyses phosphoenolpyruvate + UDP-N-acetyl-alpha-D-glucosamine = UDP-N-acetyl-3-O-(1-carboxyvinyl)-alpha-D-glucosamine + phosphate. It functions in the pathway cell wall biogenesis; peptidoglycan biosynthesis. In terms of biological role, cell wall formation. Adds enolpyruvyl to UDP-N-acetylglucosamine. The sequence is that of UDP-N-acetylglucosamine 1-carboxyvinyltransferase from Nitratidesulfovibrio vulgaris (strain DP4) (Desulfovibrio vulgaris).